Consider the following 282-residue polypeptide: tRNA uridine(34) hydroxylase (282 aa).

The 95-residue stretch at 128 to 222 (EGRPVVMLDT…YFEEVGGSHY (95 aa)) folds into the Rhodanese domain. Catalysis depends on cysteine 182, which acts as the Cysteine persulfide intermediate.

It belongs to the TrhO family.

It catalyses the reaction uridine(34) in tRNA + AH2 + O2 = 5-hydroxyuridine(34) in tRNA + A + H2O. Its function is as follows. Catalyzes oxygen-dependent 5-hydroxyuridine (ho5U) modification at position 34 in tRNAs. This Cupriavidus necator (strain ATCC 17699 / DSM 428 / KCTC 22496 / NCIMB 10442 / H16 / Stanier 337) (Ralstonia eutropha) protein is tRNA uridine(34) hydroxylase.